We begin with the raw amino-acid sequence, 234 residues long: Purine nucleoside phosphorylase DeoD-type (234 aa).

His-4 serves as a coordination point for a purine D-ribonucleoside. Phosphate contacts are provided by residues Gly-20, Arg-24, Arg-43, and 87–90; that span reads RIGS. A purine D-ribonucleoside contacts are provided by residues Glu-162, 179–181, and 203–204; these read EME and SD. Asp-204 acts as the Proton donor in catalysis.

It belongs to the PNP/UDP phosphorylase family. In terms of assembly, homohexamer; trimer of homodimers.

The catalysed reaction is a purine D-ribonucleoside + phosphate = a purine nucleobase + alpha-D-ribose 1-phosphate. The enzyme catalyses a purine 2'-deoxy-D-ribonucleoside + phosphate = a purine nucleobase + 2-deoxy-alpha-D-ribose 1-phosphate. In terms of biological role, catalyzes the reversible phosphorolytic breakdown of the N-glycosidic bond in the beta-(deoxy)ribonucleoside molecules, with the formation of the corresponding free purine bases and pentose-1-phosphate. The protein is Purine nucleoside phosphorylase DeoD-type of Roseobacter denitrificans (strain ATCC 33942 / OCh 114) (Erythrobacter sp. (strain OCh 114)).